The chain runs to 594 residues: Lysine--tRNA ligase cla4 (594 aa).

The interval 1–62 is disordered; that stretch reads MADPGAVKET…KETSSEQDEA (62 aa). The segment covering 18–42 has biased composition (basic and acidic residues); the sequence is TGEKVSKTELKKRLKSRAKEAEKQK.

This sequence belongs to the class-II aminoacyl-tRNA synthetase family. Homodimer.

The catalysed reaction is tRNA(Lys) + L-lysine + ATP = L-lysyl-tRNA(Lys) + AMP + diphosphate. Functionally, involved in self-resistance to cladosporin since this product is an inhibitor of lysyl-tRNA synthetase. Cla4 may not be inhibited by cladosporin, thereby imparting cladosporin resistance. When cladosporin biosynthesis is switched on, transcription of cla4 will then be necessary for continued protein synthesis in C.cladosporioides. The chain is Lysine--tRNA ligase cla4 from Cladosporium cladosporioides.